The following is a 155-amino-acid chain: Small ribosomal subunit protein bS16 (155 aa).

The interval 100 to 155 is disordered; sequence EAGIPDPAPSTEEPAAVCEASAEMAGQPGEVEPAGAAAEPNSQEPEPEEEKPQVEA. Positions 124–143 are enriched in low complexity; that stretch reads AGQPGEVEPAGAAAEPNSQE.

Belongs to the bacterial ribosomal protein bS16 family.

This Synechococcus sp. (strain JA-3-3Ab) (Cyanobacteria bacterium Yellowstone A-Prime) protein is Small ribosomal subunit protein bS16.